Reading from the N-terminus, the 317-residue chain is MIMRFGYVSHAMALWDCSPAKTMTFTSFKKLSKQEREDKLYHVIRQNLEHTIRILHYNIAHEIPLYRLSSSIVPLATHPEVEFDYIGVFTPLWRKIGALIKEHNLRISFHPNQFTLFTSDKPHITTNAITDMTYHYKILDAIGIADSSYINIHVGGAYGNKEKAIERFHENIKKLPAHIKKQMTLENDDKTYTTSETLSICQKENIPFVFDYHHHMANLCEQPLEELLPAIFETWSHTNISPKVHISSPRSEKEFRAHAEYIDLEFIKPFLHVAKKNNHNFDIMIESKQKDLALFRLIDELSAIRGIKRISGAMLQW.

It belongs to the uve1/UvsE family.

Functionally, component in a DNA repair pathway. Removal of UV LIGHT damaged nucleotides. Recognizes pyrimidine dimers and cleave a phosphodiester bond immediately 5' to the lesion. The protein is UV DNA damage endonuclease of Bacillus cereus (strain G9842).